The chain runs to 235 residues: Protein Thf1 (235 aa).

Residues 179 to 228 (LNLSSDKLQKDLDLYRSNVDKMGQLLAVIEDALEAERKKREKAKQEVATT) adopt a coiled-coil conformation.

It belongs to the THF1 family.

May be involved in photosynthetic membrane biogenesis. This Rippkaea orientalis (strain PCC 8801 / RF-1) (Cyanothece sp. (strain PCC 8801)) protein is Protein Thf1.